A 245-amino-acid polypeptide reads, in one-letter code: Complement C1q subcomponent subunit C (245 aa).

The first 28 residues, 1 to 28 (MDVGPSSLPHLGLKLLLLLLLLPLRGQA), serve as a signal peptide directing secretion. The 82-residue stretch at 31–112 (GCYGIPGMPG…GIPGEPGEEG (82 aa)) folds into the Collagen-like domain. Residues P36, P39, P42, P45, P54, and P63 each carry the 4-hydroxyproline modification. The interval 45–113 (PGKDGYDGLP…IPGEPGEEGR (69 aa)) is disordered. Residues 54-71 (PGPKGEPGIPAIPGIRGP) are compositionally biased toward low complexity. Position 75 is a 5-hydroxylysine (K75). A glycan (O-linked (Gal...) hydroxylysine) is linked at K75. Residues P81, P93, P96, P99, and P105 each carry the 4-hydroxyproline modification. Over residues 90-99 (MGPPGMPGVP) the composition is skewed to pro residues. The 131-residue stretch at 115-245 (KQKFQSVFTV…VFSGFLLFPD (131 aa)) folds into the C1q domain. Residues C179 and C193 are joined by a disulfide bond.

Core component of the complement C1 complex, a calcium-dependent complex composed of 1 molecule of the C1Q subcomplex, 2 molecules of C1R and 2 molecules of C1S. The C1Q subcomplex is composed 18 subunits: 3 chains of C1QA, C1QB, and C1QC trimerize to form 6 collagen-like triple helices connected to six globular ligand-recognition modules (C1q domain). Post-translationally, O-linked glycans consist of Glc-Gal disaccharides bound to the oxygen atom of post-translationally added hydroxyl groups.

The protein localises to the secreted. The protein resides in the cell surface. With respect to regulation, the C1Q subcomplex is inhibited by sulfated molecules, such as triterpenoid sulfates, heparan sulfate, or chondroitin sulfates. Core component of the complement C1 complex, a multiprotein complex that initiates the classical pathway of the complement system, a cascade of proteins that leads to phagocytosis and breakdown of pathogens and signaling that strengthens the adaptive immune system. The classical complement pathway is initiated by the C1Q subcomplex of the C1 complex, which specifically binds IgG or IgM immunoglobulins complexed with antigens, forming antigen-antibody complexes on the surface of pathogens: C1QA, together with C1QB and C1QC, specifically recognizes and binds the Fc regions of IgG or IgM via its C1q domain. Immunoglobulin-binding activates the proenzyme C1R, which cleaves C1S, initiating the proteolytic cascade of the complement system. The C1Q subcomplex is activated by a hexamer of IgG complexed with antigens, while it is activated by a pentameric IgM. The C1Q subcomplex also recognizes and binds phosphatidylserine exposed on the surface of cells undergoing programmed cell death, possibly promoting activation of the complement system. The chain is Complement C1q subcomponent subunit C from Homo sapiens (Human).